We begin with the raw amino-acid sequence, 121 residues long: MTKEQIIGALKEMSVLELNEVVKACEEEFGVSAAAPVAVVGGAAAGAAAEEKSEFDVVLTNAGANKIKVIKAVRELTGLGLKEAKEIVDGAPKTLKEAVAKEEAEDMKAKLAEVGAEVELK.

The protein belongs to the bacterial ribosomal protein bL12 family. As to quaternary structure, homodimer. Part of the ribosomal stalk of the 50S ribosomal subunit. Forms a multimeric L10(L12)X complex, where L10 forms an elongated spine to which 2 to 4 L12 dimers bind in a sequential fashion. Binds GTP-bound translation factors.

Functionally, forms part of the ribosomal stalk which helps the ribosome interact with GTP-bound translation factors. Is thus essential for accurate translation. The polypeptide is Large ribosomal subunit protein bL12 (Clostridium perfringens (strain 13 / Type A)).